Here is a 457-residue protein sequence, read N- to C-terminus: Argininosuccinate lyase (457 aa).

This sequence belongs to the lyase 1 family. Argininosuccinate lyase subfamily.

It localises to the cytoplasm. The enzyme catalyses 2-(N(omega)-L-arginino)succinate = fumarate + L-arginine. It functions in the pathway amino-acid biosynthesis; L-arginine biosynthesis; L-arginine from L-ornithine and carbamoyl phosphate: step 3/3. This is Argininosuccinate lyase from Shigella flexneri serotype 5b (strain 8401).